We begin with the raw amino-acid sequence, 173 residues long: Calcium-binding protein 5 (173 aa).

EF-hand domains follow at residues 28–63, 82–99, 105–140, and 142–173; these read DEIE…MGYM, GRVD…KLLA, IGVQ…LLGD, and LTSQ…MMSR. Positions 41, 43, 45, and 52 each coordinate Ca(2+). Residues Asp-118, Asn-120, Asp-122, Glu-124, Glu-129, Asp-155, Asn-157, Asp-159, Thr-161, and Glu-166 each contribute to the Ca(2+) site.

As to quaternary structure, interacts with CACNA1C (via C-terminal CDB motif) in a calcium-dependent manner. Interacts with STXBP1. Interacts with MYO6. Expressed in the retina (at protein level).

It is found in the cytoplasm. Functionally, inhibits calcium-dependent inactivation of L-type calcium channel and shifts voltage dependence of activation to more depolarized membrane potentials. Involved in the transmission of light signals. May positively regulate neurotransmitter vesicle endocytosis and exocytosis in a salt-dependent manner. May play a role in the extension and network organization of neurites. In Bos taurus (Bovine), this protein is Calcium-binding protein 5 (CABP5).